A 293-amino-acid polypeptide reads, in one-letter code: Energy-coupling factor transporter ATP-binding protein EcfA2 (293 aa).

An ABC transporter domain is found at 3 to 246 (ITFQKVEHRY…ADELEKIGVD (244 aa)). Residue 40 to 47 (GHTGSGKS) coordinates ATP.

The protein belongs to the ABC transporter superfamily. Energy-coupling factor EcfA family. In terms of assembly, forms a stable energy-coupling factor (ECF) transporter complex composed of 2 membrane-embedded substrate-binding proteins (S component), 2 ATP-binding proteins (A component) and 2 transmembrane proteins (T component).

The protein resides in the cell membrane. Its function is as follows. ATP-binding (A) component of a common energy-coupling factor (ECF) ABC-transporter complex. Unlike classic ABC transporters this ECF transporter provides the energy necessary to transport a number of different substrates. The sequence is that of Energy-coupling factor transporter ATP-binding protein EcfA2 from Bacillus cereus (strain ATCC 10987 / NRS 248).